The following is a 334-amino-acid chain: Transaldolase (334 aa).

An N-acetylserine modification is found at Ser2. The active-site Schiff-base intermediate with substrate is Lys143.

It belongs to the transaldolase family. Type 1 subfamily. As to quaternary structure, homodimer.

It catalyses the reaction D-sedoheptulose 7-phosphate + D-glyceraldehyde 3-phosphate = D-erythrose 4-phosphate + beta-D-fructose 6-phosphate. The protein operates within carbohydrate degradation; pentose phosphate pathway; D-glyceraldehyde 3-phosphate and beta-D-fructose 6-phosphate from D-ribose 5-phosphate and D-xylulose 5-phosphate (non-oxidative stage): step 2/3. Its function is as follows. Transaldolase is important for the balance of metabolites in the pentose-phosphate pathway. The chain is Transaldolase (TAL1) from Kluyveromyces lactis (strain ATCC 8585 / CBS 2359 / DSM 70799 / NBRC 1267 / NRRL Y-1140 / WM37) (Yeast).